We begin with the raw amino-acid sequence, 203 residues long: ATP-dependent Clp protease proteolytic subunit 2 (203 aa).

The active-site Nucleophile is the Ser100. His125 is a catalytic residue.

It belongs to the peptidase S14 family. As to quaternary structure, fourteen ClpP subunits assemble into 2 heptameric rings which stack back to back to give a disk-like structure with a central cavity, resembling the structure of eukaryotic proteasomes.

It localises to the cytoplasm. The catalysed reaction is Hydrolysis of proteins to small peptides in the presence of ATP and magnesium. alpha-casein is the usual test substrate. In the absence of ATP, only oligopeptides shorter than five residues are hydrolyzed (such as succinyl-Leu-Tyr-|-NHMec, and Leu-Tyr-Leu-|-Tyr-Trp, in which cleavage of the -Tyr-|-Leu- and -Tyr-|-Trp bonds also occurs).. Its function is as follows. Cleaves peptides in various proteins in a process that requires ATP hydrolysis. Has a chymotrypsin-like activity. Plays a major role in the degradation of misfolded proteins. This Thermobifida fusca (strain YX) protein is ATP-dependent Clp protease proteolytic subunit 2.